The sequence spans 250 residues: Urease accessory protein UreF (250 aa).

Residues methionine 1–alanine 21 form a disordered region. Positions alanine 9–alanine 21 are enriched in low complexity.

This sequence belongs to the UreF family. As to quaternary structure, ureD, UreF and UreG form a complex that acts as a GTP-hydrolysis-dependent molecular chaperone, activating the urease apoprotein by helping to assemble the nickel containing metallocenter of UreC. The UreE protein probably delivers the nickel.

Its subcellular location is the cytoplasm. In terms of biological role, required for maturation of urease via the functional incorporation of the urease nickel metallocenter. The chain is Urease accessory protein UreF from Methylobacterium sp. (strain 4-46).